A 348-amino-acid chain; its full sequence is E3 ubiquitin-protein ligase IE2 (348 aa).

Polar residues predominate over residues 1–11 (MSRQINANTPV). The interval 1-32 (MSRQINANTPVSRRRSGLRGRRLSYSPEDAVP) is disordered. Residues 12–22 (SRRRSGLRGRR) are compositionally biased toward basic residues. The segment at 179-227 (CHICSCFFTDIKNYNSSFVTTSECNHAVCFKCYTSIMFDKELFKCSMCN) adopts an RING-type zinc-finger fold. A coiled-coil region spans residues 272–306 (KVPEQNDVQKLQAELAELRAEMASMRAEMASKQLG). Residues 312–333 (ENRRGSSSSGASSSSTSTSSSS) are disordered. Residues 316–333 (GSSSSGASSSSTSTSSSS) are compositionally biased toward low complexity.

Belongs to the alphabaculovirus IE2 protein family. As to quaternary structure, homooligomer. In terms of processing, auto-ubiquitinated.

Its subcellular location is the host nucleus. The catalysed reaction is S-ubiquitinyl-[E2 ubiquitin-conjugating enzyme]-L-cysteine + [acceptor protein]-L-lysine = [E2 ubiquitin-conjugating enzyme]-L-cysteine + N(6)-ubiquitinyl-[acceptor protein]-L-lysine.. Its function is as follows. RING-finger E3 ubiquitin ligase that plays an important regulatory role during the initial stages of infection. Migrates to specific nuclear foci early in infection supposely to prepare the sites for viral replication by targeting and ubiquitinating host proteins. This is E3 ubiquitin-protein ligase IE2 (IE2) from Choristoneura fumiferana (Spruce budworm moth).